Consider the following 94-residue polypeptide: ESAT-6-like protein EsxI (94 aa).

The protein belongs to the WXG100 family. ESAT-6 subfamily.

It is found in the secreted. In Mycobacterium bovis (strain ATCC BAA-935 / AF2122/97), this protein is ESAT-6-like protein EsxI.